The primary structure comprises 155 residues: MGWENAPSHICRGGDLRGLAFCCPPIKYCPIHKALAVLKMSPEEFIRIKEEFGKRTKLGLGENTCFGSLVWCCKITKPCPYRDYELAKNNISPDEYMELKKQLAEEIIRNSQFFKEAVEVFVKKGIPKDIAEKCILETGDLKKAYEMAIKMIDKD.

This is an uncharacterized protein from Methanocaldococcus jannaschii (strain ATCC 43067 / DSM 2661 / JAL-1 / JCM 10045 / NBRC 100440) (Methanococcus jannaschii).